The following is a 155-amino-acid chain: Snaclec agkicetin-C subunit alpha (155 aa).

Positions 1 to 23 are cleaved as a signal peptide; it reads MGRFIFVSFGLLVVFLSLSGTAA. Cystine bridges form between Cys-25/Cys-36, Cys-53/Cys-149, and Cys-124/Cys-141. A C-type lectin domain is found at 32-150; the sequence is YIRFCYQPFK…CGLKHVFMCK (119 aa).

Belongs to the snaclec family. In terms of assembly, heterodimer of subunits alpha and beta; disulfide-linked. As to expression, expressed by the venom gland.

It localises to the secreted. Is a potent glycoprotein Ibalpha (GP1BA) antagonist. Concentration-dependently inhibits botrocetin-, ristocetin- and low dose thrombin-induced platelet aggregation. Inhibits platelet adhesion only through inhibiting the vWF interaction with GP1BA, but has minimal effect on other platelet receptors, such as alpha-IIb/beta-3 (ITGA2B/ITGB3) or alpha-2/beta-1 (ITGA2/ITGB1). Causes an instant severe thrombocytopenia in rats and is not lethal to mice. This chain is Snaclec agkicetin-C subunit alpha, found in Deinagkistrodon acutus (Hundred-pace snake).